The following is a 359-amino-acid chain: 4-hydroxy-3-methylbut-2-en-1-yl diphosphate synthase (flavodoxin) (359 aa).

Residues C264, C267, C299, and E306 each coordinate [4Fe-4S] cluster.

The protein belongs to the IspG family. [4Fe-4S] cluster serves as cofactor.

It carries out the reaction (2E)-4-hydroxy-3-methylbut-2-enyl diphosphate + oxidized [flavodoxin] + H2O + 2 H(+) = 2-C-methyl-D-erythritol 2,4-cyclic diphosphate + reduced [flavodoxin]. It functions in the pathway isoprenoid biosynthesis; isopentenyl diphosphate biosynthesis via DXP pathway; isopentenyl diphosphate from 1-deoxy-D-xylulose 5-phosphate: step 5/6. Its function is as follows. Converts 2C-methyl-D-erythritol 2,4-cyclodiphosphate (ME-2,4cPP) into 1-hydroxy-2-methyl-2-(E)-butenyl 4-diphosphate. This chain is 4-hydroxy-3-methylbut-2-en-1-yl diphosphate synthase (flavodoxin), found in Helicobacter pylori (strain G27).